The chain runs to 381 residues: Cobalt-precorrin-5B C(1)-methyltransferase (381 aa).

This sequence belongs to the CbiD family.

The catalysed reaction is Co-precorrin-5B + S-adenosyl-L-methionine = Co-precorrin-6A + S-adenosyl-L-homocysteine. It participates in cofactor biosynthesis; adenosylcobalamin biosynthesis; cob(II)yrinate a,c-diamide from sirohydrochlorin (anaerobic route): step 6/10. Its function is as follows. Catalyzes the methylation of C-1 in cobalt-precorrin-5B to form cobalt-precorrin-6A. The sequence is that of Cobalt-precorrin-5B C(1)-methyltransferase from Methylococcus capsulatus (strain ATCC 33009 / NCIMB 11132 / Bath).